We begin with the raw amino-acid sequence, 545 residues long: CTP synthase (545 aa).

An amidoligase domain region spans residues 1–266; it reads MITNYIFVTG…DQYICDKFNL (266 aa). Serine 14 is a CTP binding site. UTP is bound at residue serine 14. Residues 15–20 and aspartate 72 contribute to the ATP site; that span reads SLGKGI. Mg(2+)-binding residues include aspartate 72 and glutamate 140. CTP is bound by residues 147 to 149, 187 to 192, and lysine 223; these read DIE and KTKPTQ. Residues 187-192 and lysine 223 each bind UTP; that span reads KTKPTQ. An ATP-binding site is contributed by 239 to 241; it reads KDV. The region spanning 291–542 is the Glutamine amidotransferase type-1 domain; the sequence is SIGMVGKYIE…VKSALAHHQD (252 aa). Glycine 352 is an L-glutamine binding site. The active-site Nucleophile; for glutamine hydrolysis is cysteine 379. Residues 380 to 383, glutamate 403, and arginine 470 contribute to the L-glutamine site; that span reads LGMQ. Residues histidine 515 and glutamate 517 contribute to the active site.

Belongs to the CTP synthase family. As to quaternary structure, homotetramer.

It carries out the reaction UTP + L-glutamine + ATP + H2O = CTP + L-glutamate + ADP + phosphate + 2 H(+). The enzyme catalyses L-glutamine + H2O = L-glutamate + NH4(+). It catalyses the reaction UTP + NH4(+) + ATP = CTP + ADP + phosphate + 2 H(+). It functions in the pathway pyrimidine metabolism; CTP biosynthesis via de novo pathway; CTP from UDP: step 2/2. Allosterically activated by GTP, when glutamine is the substrate; GTP has no effect on the reaction when ammonia is the substrate. The allosteric effector GTP functions by stabilizing the protein conformation that binds the tetrahedral intermediate(s) formed during glutamine hydrolysis. Inhibited by the product CTP, via allosteric rather than competitive inhibition. Catalyzes the ATP-dependent amination of UTP to CTP with either L-glutamine or ammonia as the source of nitrogen. Regulates intracellular CTP levels through interactions with the four ribonucleotide triphosphates. This Hamiltonella defensa subsp. Acyrthosiphon pisum (strain 5AT) protein is CTP synthase.